The sequence spans 353 residues: UPF0283 membrane protein YcjF (353 aa).

3 helical membrane-spanning segments follow: residues 70-90 (MVMGGLALFGASVVGQGVQWT), 100-120 (VALGGCAAGALIIGAGVGSVV), and 213-233 (ESTLMIAVSPLALVDMAFIAW).

Belongs to the UPF0283 family.

It is found in the cell inner membrane. The sequence is that of UPF0283 membrane protein YcjF from Shigella boydii serotype 4 (strain Sb227).